The chain runs to 197 residues: Holliday junction branch migration complex subunit RuvA (197 aa).

The domain I stretch occupies residues 1-62 (MIEFVRGEVA…EDQEVLFGFR (62 aa)). The interval 63 to 141 (SRRERALFTK…ELAPDYIPSE (79 aa)) is domain II. The flexible linker stretch occupies residues 141–145 (EGLFA). The segment at 146-197 (QGNAELNEACEALTALGYSEREVEKVKKALQGEVLSTDQYVKRALQLLLNVR) is domain III.

The protein belongs to the RuvA family. Homotetramer. Forms an RuvA(8)-RuvB(12)-Holliday junction (HJ) complex. HJ DNA is sandwiched between 2 RuvA tetramers; dsDNA enters through RuvA and exits via RuvB. An RuvB hexamer assembles on each DNA strand where it exits the tetramer. Each RuvB hexamer is contacted by two RuvA subunits (via domain III) on 2 adjacent RuvB subunits; this complex drives branch migration. In the full resolvosome a probable DNA-RuvA(4)-RuvB(12)-RuvC(2) complex forms which resolves the HJ.

The protein localises to the cytoplasm. Its function is as follows. The RuvA-RuvB-RuvC complex processes Holliday junction (HJ) DNA during genetic recombination and DNA repair, while the RuvA-RuvB complex plays an important role in the rescue of blocked DNA replication forks via replication fork reversal (RFR). RuvA specifically binds to HJ cruciform DNA, conferring on it an open structure. The RuvB hexamer acts as an ATP-dependent pump, pulling dsDNA into and through the RuvAB complex. HJ branch migration allows RuvC to scan DNA until it finds its consensus sequence, where it cleaves and resolves the cruciform DNA. This is Holliday junction branch migration complex subunit RuvA from Exiguobacterium sibiricum (strain DSM 17290 / CCUG 55495 / CIP 109462 / JCM 13490 / 255-15).